The sequence spans 2183 residues: Genome polyprotein (2183 aa).

A lipid anchor (N-myristoyl glycine; by host) is attached at glycine 2. The Cytoplasmic portion of the chain corresponds to 2–1493 (GAQVSTQKTG…HVSRAFICLQ (1492 aa)). The interval 566 to 582 (FYQGPTEESVERAMGRV) is amphipathic alpha-helix. Active-site for protease 2A activity residues include histidine 870 and aspartate 888. Zn(2+) contacts are provided by cysteine 905 and cysteine 907. Cysteine 959 acts as the For protease 2A activity in catalysis. Residues cysteine 965 and histidine 967 each contribute to the Zn(2+) site. Positions 1099 to 1171 (NNNWLKKFTE…EQSAPSQSDQ (73 aa)) are membrane-binding. Positions 1099 to 1237 (NNNWLKKFTE…SPGAGKSVAT (139 aa)) are oligomerization. An RNA-binding region spans residues 1120 to 1124 (AVKIQ). The SF3 helicase domain occupies 1203–1359 (EKKMSNYIQF…SMYSQNGKIN (157 aa)). Cysteine 1367, cysteine 1379, and cysteine 1384 together coordinate Zn(2+). The segment at 1367–1384 (CDEECCPVNFKKCCPLVC) adopts a C4-type; degenerate zinc-finger fold. The interval 1411–1418 (EYNHRHSV) is RNA-binding. The segment at 1422-1427 (LEALFQ) is oligomerization. Residues 1494-1509 (ALTTFVSVAGIIYIIY) lie within the membrane without spanning it. Residues 1510–2183 (KLFAGFQGAY…TLRRKWLDAF (674 aa)) are Cytoplasmic-facing. At tyrosine 1519 the chain carries O-(5'-phospho-RNA)-tyrosine. In terms of domain architecture, Peptidase C3 spans 1539-1717 (GPAFEFAVAM…FSASLLRHYF (179 aa)). Active-site for protease 3C activity residues include histidine 1578, glutamate 1609, and cysteine 1685. A RdRp catalytic domain is found at 1948–2064 (GHLRAFDYSG…SYPLPIDASL (117 aa)). Positions 1954 and 2050 each coordinate Mg(2+).

This sequence belongs to the picornaviruses polyprotein family. In terms of assembly, interacts with capsid protein VP1 and capsid protein VP3 to form heterotrimeric protomers. Interacts with capsid protein VP0, and capsid protein VP3 to form heterotrimeric protomers. Five protomers subsequently associate to form pentamers which serve as building blocks for the capsid. Interacts with capsid protein VP2, capsid protein VP3 and capsid protein VP4 following cleavage of capsid protein VP0. Interacts with host CXADR. As to quaternary structure, interacts with capsid protein VP1 and capsid protein VP3 in the mature capsid. In terms of assembly, interacts with capsid protein VP0 and capsid protein VP1 to form heterotrimeric protomers. Five protomers subsequently associate to form pentamers which serve as building blocks for the capsid. Interacts with capsid protein VP4 in the mature capsid. Interacts with protein 2C; this interaction may be important for virion morphogenesis. Interacts with capsid protein VP1 and capsid protein VP3. As to quaternary structure, homodimer. In terms of assembly, homohexamer; forms a hexameric ring structure with 6-fold symmetry characteristic of AAA+ ATPases. Interacts (via N-terminus) with host RTN3 (via reticulon domain); this interaction is important for viral replication. Interacts with capsid protein VP3; this interaction may be important for virion morphogenesis. Interacts with protein 3CD. As to quaternary structure, homodimer. Interacts with host GBF1. Interacts (via GOLD domain) with host ACBD3 (via GOLD domain); this interaction allows the formation of a viral protein 3A/ACBD3 heterotetramer with a 2:2 stoichiometry, which will stimulate the recruitment of host PI4KB in order to synthesize PI4P at the viral RNA replication sites. In terms of assembly, interacts with RNA-directed RNA polymerase. Interacts with protein 3AB and with RNA-directed RNA polymerase. As to quaternary structure, interacts with Viral protein genome-linked and with protein 3CD. The cofactor is Mg(2+). In terms of processing, specific enzymatic cleavages in vivo by the viral proteases yield processing intermediates and the mature proteins. Post-translationally, myristoylation is required for the formation of pentamers during virus assembly. Further assembly of 12 pentamers and a molecule of genomic RNA generates the provirion. During virion maturation, immature virions are rendered infectious following cleavage of VP0 into VP4 and VP2. This maturation seems to be an autocatalytic event triggered by the presence of RNA in the capsid and it is followed by a conformational change infectious virion. In terms of processing, myristoylation is required during RNA encapsidation and formation of the mature virus particle. Post-translationally, VPg is uridylylated by the polymerase into VPg-pUpU. This acts as a nucleotide-peptide primer for the genomic RNA replication.

It localises to the virion. It is found in the host cytoplasm. The protein localises to the host cytoplasmic vesicle membrane. The protein resides in the host nucleus. It catalyses the reaction a ribonucleoside 5'-triphosphate + H2O = a ribonucleoside 5'-diphosphate + phosphate + H(+). The enzyme catalyses Selective cleavage of Tyr-|-Gly bond in the picornavirus polyprotein.. It carries out the reaction RNA(n) + a ribonucleoside 5'-triphosphate = RNA(n+1) + diphosphate. The catalysed reaction is Selective cleavage of Gln-|-Gly bond in the poliovirus polyprotein. In other picornavirus reactions Glu may be substituted for Gln, and Ser or Thr for Gly.. With respect to regulation, replication or transcription is subject to high level of random mutations by the nucleotide analog ribavirin. In terms of biological role, forms an icosahedral capsid of pseudo T=3 symmetry with capsid proteins VP2 and VP3. The capsid is 300 Angstroms in diameter, composed of 60 copies of each capsid protein and enclosing the viral positive strand RNA genome. Capsid protein VP1 mainly forms the vertices of the capsid. Capsid protein VP1 interacts with host CXADR to provide virion attachment to target host cells. This attachment induces virion internalization. Tyrosine kinases are probably involved in the entry process. After binding to its receptor, the capsid undergoes conformational changes. Capsid protein VP1 N-terminus (that contains an amphipathic alpha-helix) and capsid protein VP4 are externalized. Together, they shape a pore in the host membrane through which viral genome is translocated to host cell cytoplasm. Functionally, forms an icosahedral capsid of pseudo T=3 symmetry with capsid proteins VP2 and VP3. The capsid is 300 Angstroms in diameter, composed of 60 copies of each capsid protein and enclosing the viral positive strand RNA genome. Its function is as follows. Lies on the inner surface of the capsid shell. After binding to the host receptor, the capsid undergoes conformational changes. Capsid protein VP4 is released, Capsid protein VP1 N-terminus is externalized, and together, they shape a pore in the host membrane through which the viral genome is translocated into the host cell cytoplasm. Component of immature procapsids, which is cleaved into capsid proteins VP4 and VP2 after maturation. Allows the capsid to remain inactive before the maturation step. In terms of biological role, cysteine protease that cleaves viral polyprotein and specific host proteins. It is responsible for the autocatalytic cleavage between the P1 and P2 regions, which is the first cleavage occurring in the polyprotein. Also cleaves the host translation initiation factor EIF4G1, in order to shut down the capped cellular mRNA translation. Inhibits the host nucleus-cytoplasm protein and RNA trafficking by cleaving host members of the nuclear pores. Counteracts stress granule formation probably by antagonizing its assembly or promoting its dissassembly. Cleaves and inhibits host IFIH1/MDA5, thereby inhibiting the type-I IFN production and the establishment of the antiviral state. Cleaves and inhibits host MAVS, thereby inhibiting the type-I IFN production and the establishment of the antiviral state. Functionally, plays an essential role in the virus replication cycle by acting as a viroporin. Creates a pore in the host endoplasmic reticulum and as a consequence releases Ca2+ in the cytoplasm of infected cell. In turn, high levels of cytoplasmic calcium may trigger membrane trafficking and transport of viral ER-associated proteins to viroplasms, sites of viral genome replication. Its function is as follows. Induces and associates with structural rearrangements of intracellular membranes. Displays RNA-binding, nucleotide binding and NTPase activities. May play a role in virion morphogenesis and viral RNA encapsidation by interacting with the capsid protein VP3. Localizes the viral replication complex to the surface of membranous vesicles. Together with protein 3CD binds the Cis-Active RNA Element (CRE) which is involved in RNA synthesis initiation. Acts as a cofactor to stimulate the activity of 3D polymerase, maybe through a nucleid acid chaperone activity. In terms of biological role, localizes the viral replication complex to the surface of membranous vesicles. It inhibits host cell endoplasmic reticulum-to-Golgi apparatus transport and causes the disassembly of the Golgi complex, possibly through GBF1 interaction. This would result in depletion of MHC, trail receptors and IFN receptors at the host cell surface. Plays an essential role in viral RNA replication by recruiting ACBD3 and PI4KB at the viral replication sites, thereby allowing the formation of the rearranged membranous structures where viral replication takes place. Functionally, acts as a primer for viral RNA replication and remains covalently bound to viral genomic RNA. VPg is uridylylated prior to priming replication into VPg-pUpU. The oriI viral genomic sequence may act as a template for this. The VPg-pUpU is then used as primer on the genomic RNA poly(A) by the RNA-dependent RNA polymerase to replicate the viral genome. During genome replication, the VPg-RNA linkage is removed by the host TDP2, thereby accelerating replication. During the late stage of the replication cycle, host TDP2 is excluded from sites of viral RNA synthesis and encapsidation, allowing for the generation of progeny virions. Its function is as follows. Involved in the viral replication complex and viral polypeptide maturation. It exhibits protease activity with a specificity and catalytic efficiency that is different from protease 3C. Protein 3CD lacks polymerase activity. Protein 3CD binds to the 5'UTR of the viral genome. Replicates the viral genomic RNA on the surface of intracellular membranes. May form linear arrays of subunits that propagate along a strong head-to-tail interaction called interface-I. Covalently attaches UMP to a tyrosine of VPg, which is used to prime RNA synthesis. The positive stranded RNA genome is first replicated at virus induced membranous vesicles, creating a dsRNA genomic replication form. This dsRNA is then used as template to synthesize positive stranded RNA genomes. ss(+)RNA genomes are either translated, replicated or encapsidated. In terms of biological role, major viral protease that mediates proteolytic processing of the polyprotein. Cleaves host EIF5B, contributing to host translation shutoff. Also cleaves host PABPC1, contributing to host translation shutoff. Cleaves host NLRP1, triggers host N-glycine-mediated degradation of the autoinhibitory NLRP1 N-terminal fragment. In Coxsackievirus B4 (strain E2), this protein is Genome polyprotein.